The primary structure comprises 383 residues: Serpin B5 (383 aa).

Asn-106, Asn-133, Asn-176, and Asn-361 each carry an N-linked (GlcNAc...) asparagine glycan.

The protein belongs to the serpin family. Ov-serpin subfamily.

The protein localises to the secreted. The protein resides in the extracellular space. May not exhibit serine protease inhibitory activity. This Xenopus laevis (African clawed frog) protein is Serpin B5 (serpinb5).